Here is a 67-residue protein sequence, read N- to C-terminus: Large ribosomal subunit protein uL29 (67 aa).

It belongs to the universal ribosomal protein uL29 family.

This Desulfitobacterium hafniense (strain Y51) protein is Large ribosomal subunit protein uL29.